The sequence spans 415 residues: Serine hydroxymethyltransferase (415 aa).

Residues Leu117 and Gly121–Leu123 contribute to the (6S)-5,6,7,8-tetrahydrofolate site. Residue Lys226 is modified to N6-(pyridoxal phosphate)lysine. Residue Glu241 participates in (6S)-5,6,7,8-tetrahydrofolate binding.

The protein belongs to the SHMT family. Homodimer. It depends on pyridoxal 5'-phosphate as a cofactor.

It localises to the cytoplasm. It carries out the reaction (6R)-5,10-methylene-5,6,7,8-tetrahydrofolate + glycine + H2O = (6S)-5,6,7,8-tetrahydrofolate + L-serine. It functions in the pathway one-carbon metabolism; tetrahydrofolate interconversion. It participates in amino-acid biosynthesis; glycine biosynthesis; glycine from L-serine: step 1/1. Catalyzes the reversible interconversion of serine and glycine with tetrahydrofolate (THF) serving as the one-carbon carrier. This reaction serves as the major source of one-carbon groups required for the biosynthesis of purines, thymidylate, methionine, and other important biomolecules. Also exhibits THF-independent aldolase activity toward beta-hydroxyamino acids, producing glycine and aldehydes, via a retro-aldol mechanism. This is Serine hydroxymethyltransferase from Bacillus pumilus (strain SAFR-032).